Here is a 282-residue protein sequence, read N- to C-terminus: Pantothenate synthetase (282 aa).

30–37 (MGYLHEGH) contacts ATP. Residue His-37 is the Proton donor of the active site. Position 61 (Gln-61) interacts with (R)-pantoate. Gln-61 contacts beta-alanine. 147-150 (GQKD) serves as a coordination point for ATP. Gln-153 contributes to the (R)-pantoate binding site. Residues Val-176 and 184–187 (LSSR) contribute to the ATP site.

This sequence belongs to the pantothenate synthetase family. In terms of assembly, homodimer.

The protein localises to the cytoplasm. It catalyses the reaction (R)-pantoate + beta-alanine + ATP = (R)-pantothenate + AMP + diphosphate + H(+). Its pathway is cofactor biosynthesis; (R)-pantothenate biosynthesis; (R)-pantothenate from (R)-pantoate and beta-alanine: step 1/1. In terms of biological role, catalyzes the condensation of pantoate with beta-alanine in an ATP-dependent reaction via a pantoyl-adenylate intermediate. The protein is Pantothenate synthetase of Desulfitobacterium hafniense (strain DSM 10664 / DCB-2).